Reading from the N-terminus, the 649-residue chain is MFVGKALQFQSFHSSIDATFWHQLSNYKVEKQKLDASPLTIHGKFNTYSRGNISIVFGEAPSNSNIKDCLAEGTLLNANTPQEFTNADVKKIREEIGEVLLNSIKNGVVSERPNELLRFLIFSYADIKAYKYHYWCLFPSFKETPHWIVKDLSPAESLIPSGPILSQIREFLSTADYYQRPFFLLIKSTLDEWTIAPLKELSHCVDKSLQFYLVAEDSVQLAEYPSWPVRNILAFAFIKFKLKVINLFLYRDGINSDTLSKSILIKVEADKDMILEAPLSIVGWERNGKGVLGPRVVNLSTVLDPFVLSESASTLNLSLMRWRLVPQLDLDRIQNSKCLLLGAGTLGCGVARNLLSWGVRHVTFVDYSTVSYSNPVRQSLFTFEDCKRKLPKAECAAQRLKEIYPNMFSTGYNISIPMLGHPIYEAGIEKTMHDYETLENLISTHDAIFLLTDTRESRWLPTVISTAMDKLLINSALGFDSWLVMRHGSVLQKENRLGCYFCNDIFAPSNSLVDRTLDQTCTVTRSGCANIATAIAVELFVSLLQHPNGHAAPVLNEDQTVLGELPHQIRGFLHNFSLMKISGMAYPQCSACSECIINEWNREKWMFVLRAINEPDYVEELCGLREVQALGEIAGTMEEWISDKESVIL.

The short motif at Gly-342–Gly-347 is the GXGXXG motif element. Cys-521 acts as the Glycyl thioester intermediate in catalysis.

The protein belongs to the ATG7 family. In terms of assembly, homodimer.

It localises to the cytoplasm. It is found in the nucleus. The protein resides in the preautophagosomal structure membrane. In terms of biological role, E1-like activating enzyme involved in the 2 ubiquitin-like systems required for cytoplasm to vacuole transport (Cvt) and autophagy. Activates atg12 for its conjugation with atg5 and atg8 for its conjugation with phosphatidylethanolamine. Both systems are needed for the atg8 association to Cvt vesicles and autophagosomes membranes. Autophagy is essential for maintenance of amino acid levels and protein synthesis under nitrogen starvation. Required for selective autophagic degradation of the nucleus (nucleophagy) as well as for mitophagy which contributes to regulate mitochondrial quantity and quality by eliminating the mitochondria to a basal level to fulfill cellular energy requirements and preventing excess ROS production. Plays a role in the regulation of filamentous growth and chronological longevity. Plays a role in meiosis and sporulation. The protein is Ubiquitin-like modifier-activating enzyme atg7 (atg7) of Schizosaccharomyces pombe (strain 972 / ATCC 24843) (Fission yeast).